The chain runs to 364 residues: Aminomethyltransferase (364 aa).

It belongs to the GcvT family. As to quaternary structure, the glycine cleavage system is composed of four proteins: P, T, L and H.

The enzyme catalyses N(6)-[(R)-S(8)-aminomethyldihydrolipoyl]-L-lysyl-[protein] + (6S)-5,6,7,8-tetrahydrofolate = N(6)-[(R)-dihydrolipoyl]-L-lysyl-[protein] + (6R)-5,10-methylene-5,6,7,8-tetrahydrofolate + NH4(+). The glycine cleavage system catalyzes the degradation of glycine. This chain is Aminomethyltransferase, found in Shewanella sp. (strain ANA-3).